Consider the following 698-residue polypeptide: Probable metal-nicotianamine transporter YSL17 (698 aa).

The tract at residues 1–36 is disordered; it reads MAEEARGGQRVVVDDDREDASSVASSTERAFEGEPL. A run of 14 helical transmembrane segments spans residues 43–63, 67–87, 114–134, 157–177, 216–236, 277–297, 322–342, 395–415, 424–444, 463–483, 511–531, 567–587, 607–627, and 644–664; these read VTARSAAVSGVLGAVVSVVAM, LTSGLLPSLGVPAGLLGFFLA, IAVVSCSTIAFSGGFGTYILG, IGRVIAFLFLVNFSGLFIIVP, VVTLFKSLGATVLWPIFQWFF, MITASMLAGSIVSWGILWPYI, VFVGVSMILADGLFTILSALV, WVAVASYAALAALSVVAVPLL, VAAAYVAAPVFAFCNAYGVGV, SWVGMDGGGVVAGLAACGIIV, VGQVAGTALGCVVNPAIFWVF, LPDHSVLLCKLFFAMALALSA, IGVAVAFFVPPRIPVGMAVGC, and LLLPAVASGLICGDGLGSLAS.

This sequence belongs to the YSL (TC 2.A.67.2) family. Expressed at low levels in roots.

It localises to the membrane. Its function is as follows. May be involved in the transport of nicotianamine-chelated metals. The chain is Probable metal-nicotianamine transporter YSL17 (YSL17) from Oryza sativa subsp. japonica (Rice).